A 409-amino-acid polypeptide reads, in one-letter code: NADH-quinone oxidoreductase subunit D (409 aa).

This sequence belongs to the complex I 49 kDa subunit family. As to quaternary structure, NDH-1 is composed of 14 different subunits. Subunits NuoB, C, D, E, F, and G constitute the peripheral sector of the complex.

The protein localises to the cell inner membrane. The catalysed reaction is a quinone + NADH + 5 H(+)(in) = a quinol + NAD(+) + 4 H(+)(out). Its function is as follows. NDH-1 shuttles electrons from NADH, via FMN and iron-sulfur (Fe-S) centers, to quinones in the respiratory chain. The immediate electron acceptor for the enzyme in this species is believed to be ubiquinone. Couples the redox reaction to proton translocation (for every two electrons transferred, four hydrogen ions are translocated across the cytoplasmic membrane), and thus conserves the redox energy in a proton gradient. This Campylobacter concisus (strain 13826) protein is NADH-quinone oxidoreductase subunit D.